A 1358-amino-acid polypeptide reads, in one-letter code: DNA-directed RNA polymerase subunit beta (1358 aa).

It belongs to the RNA polymerase beta chain family. As to quaternary structure, the RNAP catalytic core consists of 2 alpha, 1 beta, 1 beta' and 1 omega subunit. When a sigma factor is associated with the core the holoenzyme is formed, which can initiate transcription.

The enzyme catalyses RNA(n) + a ribonucleoside 5'-triphosphate = RNA(n+1) + diphosphate. DNA-dependent RNA polymerase catalyzes the transcription of DNA into RNA using the four ribonucleoside triphosphates as substrates. The polypeptide is DNA-directed RNA polymerase subunit beta (Francisella philomiragia subsp. philomiragia (strain ATCC 25017 / CCUG 19701 / FSC 153 / O#319-036)).